The following is a 157-amino-acid chain: Transcriptional repressor NrdR (157 aa).

A zinc finger lies at 3–34; sequence CPFCGHAESQVKDSRPSEDGAAIRRRRMCPEC. Residues 49-139 enclose the ATP-cone domain; the sequence is LIIVKRSGRR…VYRDFKETSD (91 aa).

This sequence belongs to the NrdR family. Zn(2+) serves as cofactor.

In terms of biological role, negatively regulates transcription of bacterial ribonucleotide reductase nrd genes and operons by binding to NrdR-boxes. This Caulobacter vibrioides (strain ATCC 19089 / CIP 103742 / CB 15) (Caulobacter crescentus) protein is Transcriptional repressor NrdR.